The chain runs to 399 residues: Large envelope protein (399 aa).

Methionine 1 carries the N-acetylmethionine modification. A lipid anchor (N-myristoyl glycine; by host) is attached at glycine 2. Residues 2–118 form a pre-S1 region; that stretch reads GLSWTVPLEW…PPLRDTHPQA (117 aa). Residues 2–173 form a pre-S region; it reads GLSWTVPLEW…FSRIGDPAPN (172 aa). Residues 2–180 are Virion surface; in external conformation-facing; the sequence is GLSWTVPLEW…APNMEGITSG (179 aa). The Intravirion; in internal conformation portion of the chain corresponds to 2 to 252; the sequence is GLSWTVPLEW…PGYRWMCLRR (251 aa). N-linked (GlcNAc...) asparagine glycosylation is present at serine 4. The segment at 85–109 is disordered; sequence KTLPADPPPASTNRQSGRQPTPITP. Over residues 95-105 the composition is skewed to polar residues; that stretch reads STNRQSGRQPT. Residues 119 to 173 form a pre-S2 region; the sequence is MQWNSTTFHQALQDPRVRGLYFPAGGSSSGTVNPVPTTASLISSIFSRIGDPAPN. Residues 181–201 form a helical membrane-spanning segment; that stretch reads FLGPLLVLQAGFFLLTKILTI. The Intravirion; in external conformation portion of the chain corresponds to 202-252; that stretch reads PQSLDSWWTSLNFLGGAPVCLGQNSQSPTSNHSPTSCPPICPGYRWMCLRR. Residues 253-273 form a helical membrane-spanning segment; that stretch reads FIIFLFILLLCLIFLLVLLGY. Topologically, residues 274 to 347 are virion surface; it reads QGMLPVCPLI…WASARFSWLS (74 aa). An N-linked (GlcNAc...) asparagine; by host glycan is attached at asparagine 319. A helical membrane pass occupies residues 348-368; that stretch reads LLVPFVQWFAGLSPTVWLSVI. Residues 369-374 are Intravirion-facing; the sequence is WMMWYW. A helical membrane pass occupies residues 375–397; sequence GPSLYNILSPFIPLLPIFFCLWV. Over 398 to 399 the chain is Virion surface; it reads YI.

This sequence belongs to the orthohepadnavirus major surface antigen family. In terms of assembly, in its internal form (Li-HBsAg), interacts with the capsid protein and with the isoform S. Interacts with host chaperone CANX. As to quaternary structure, associates with host chaperone CANX through its pre-S2 N glycan; this association may be essential for isoform M proper secretion. Interacts with isoform L. Interacts with the antigens of satellite virus HDV (HDVAgs); this interaction is required for encapsidation of HDV genomic RNA. Post-translationally, isoform M is N-terminally acetylated by host at a ratio of 90%, and N-glycosylated by host at the pre-S2 region. In terms of processing, myristoylated.

The protein resides in the virion membrane. Its function is as follows. The large envelope protein exists in two topological conformations, one which is termed 'external' or Le-HBsAg and the other 'internal' or Li-HBsAg. In its external conformation the protein attaches the virus to cell receptors and thereby initiating infection. This interaction determines the species specificity and liver tropism. This attachment induces virion internalization predominantly through caveolin-mediated endocytosis. The large envelope protein also assures fusion between virion membrane and endosomal membrane. In its internal conformation the protein plays a role in virion morphogenesis and mediates the contact with the nucleocapsid like a matrix protein. Functionally, the middle envelope protein plays an important role in the budding of the virion. It is involved in the induction of budding in a nucleocapsid independent way. In this process the majority of envelope proteins bud to form subviral lipoprotein particles of 22 nm of diameter that do not contain a nucleocapsid. The protein is Large envelope protein of Hepatitis B virus genotype E (isolate Cote d'Ivoire/ABI-129/2003) (HBV-E).